Consider the following 255-residue polypeptide: MPRYKLTIEYDGGPFCGWQYQTNGPSVQGALEAAVKAICGDDVRVHGAGRTDAGVHALAQVAHCDIARHFMPDRLRDGLNAHLRPHPIGVLEAEIVPDSFEARFSARRRHYIYRIANRRANLAIDVGRVWRVPRPLDTEAMHAAAQRLLGKHDFTTFRDTECQAKSPEKTLDQLDVIRNGDNVSIITSARSYLHSQVRSMVGSLVWVGHGRWNADDLSGALAARRREACGPVAPPDGLYLARVDYEGSIPLRQDR.

The active-site Nucleophile is the aspartate 52. Tyrosine 111 contributes to the substrate binding site.

The protein belongs to the tRNA pseudouridine synthase TruA family. As to quaternary structure, homodimer.

The catalysed reaction is uridine(38/39/40) in tRNA = pseudouridine(38/39/40) in tRNA. Formation of pseudouridine at positions 38, 39 and 40 in the anticodon stem and loop of transfer RNAs. The sequence is that of tRNA pseudouridine synthase A from Nitrobacter winogradskyi (strain ATCC 25391 / DSM 10237 / CIP 104748 / NCIMB 11846 / Nb-255).